A 697-amino-acid chain; its full sequence is Long-chain-fatty-acid--CoA ligase 6 (697 aa).

Residues 25–45 (LSATTLVSMGALAAILAYWFT) traverse the membrane as a helical; Signal-anchor for type III membrane protein segment. The Cytoplasmic segment spans residues 46-697 (HRPKALQPPC…QIEELYSISM (652 aa)).

This sequence belongs to the ATP-dependent AMP-binding enzyme family. Mg(2+) serves as cofactor. Expressed predominantly in erythrocyte precursors, in particular in reticulocytes, fetal blood cells derived from fetal liver, hemopoietic stem cells from cord blood, bone marrow and brain.

The protein localises to the mitochondrion outer membrane. Its subcellular location is the peroxisome membrane. It localises to the microsome membrane. It is found in the endoplasmic reticulum membrane. The catalysed reaction is a long-chain fatty acid + ATP + CoA = a long-chain fatty acyl-CoA + AMP + diphosphate. It carries out the reaction (5Z,8Z,11Z,14Z)-eicosatetraenoate + ATP + CoA = (5Z,8Z,11Z,14Z)-eicosatetraenoyl-CoA + AMP + diphosphate. It catalyses the reaction hexadecanoate + ATP + CoA = hexadecanoyl-CoA + AMP + diphosphate. The enzyme catalyses (E)-hexadec-2-enoate + ATP + CoA = (2E)-hexadecenoyl-CoA + AMP + diphosphate. The catalysed reaction is 15-hydroxy-(5Z,8Z,11Z,13E)-eicosatetraenoate + ATP + CoA = 15-hydroxy-(5Z,8Z,11Z,13E)-eicosatetraenoyl-CoA + AMP + diphosphate. It carries out the reaction 12-hydroxy-(5Z,8Z,10E,14Z)-eicosatetraenoate + ATP + CoA = 12-hydroxy-(5Z,8Z,10E,14Z)-eicosatetraenoyl-CoA + AMP + diphosphate. It catalyses the reaction 5-hydroxy-(6E,8Z,11Z,14Z)-eicosatetraenoate + ATP + CoA = 5-hydroxy-(6E,8Z,11Z,14Z)-eicosatetraenoyl-CoA + AMP + diphosphate. Functionally, catalyzes the conversion of long-chain fatty acids to their active form acyl-CoA for both synthesis of cellular lipids, and degradation via beta-oxidation. Plays an important role in fatty acid metabolism in brain and the acyl-CoAs produced may be utilized exclusively for the synthesis of the brain lipid. The protein is Long-chain-fatty-acid--CoA ligase 6 of Homo sapiens (Human).